A 401-amino-acid chain; its full sequence is Phosphoglycerate kinase (401 aa).

Substrate is bound by residues 21 to 23, arginine 36, 59 to 62, arginine 116, and arginine 156; these read DLN and HQGR. ATP contacts are provided by residues glutamate 331 and 357 to 360; that span reads GGDT.

Belongs to the phosphoglycerate kinase family.

The protein localises to the cytoplasm. The enzyme catalyses (2R)-3-phosphoglycerate + ATP = (2R)-3-phospho-glyceroyl phosphate + ADP. It functions in the pathway carbohydrate degradation; glycolysis; pyruvate from D-glyceraldehyde 3-phosphate: step 2/5. This chain is Phosphoglycerate kinase (pgk), found in Haloarcula vallismortis (Halobacterium vallismortis).